The chain runs to 206 residues: 2,3-bisphosphoglycerate-dependent phosphoglycerate mutase (206 aa).

Residues R9–N16, T22–G23, R61, E88–Y91, K99, R115–R116, and G159–N160 contribute to the substrate site. The active-site Tele-phosphohistidine intermediate is the H10. The active-site Proton donor/acceptor is E88.

Belongs to the phosphoglycerate mutase family. BPG-dependent PGAM subfamily. In terms of assembly, homodimer.

The catalysed reaction is (2R)-2-phosphoglycerate = (2R)-3-phosphoglycerate. It functions in the pathway carbohydrate degradation; glycolysis; pyruvate from D-glyceraldehyde 3-phosphate: step 3/5. In terms of biological role, catalyzes the interconversion of 2-phosphoglycerate and 3-phosphoglycerate. In Bartonella bacilliformis (strain ATCC 35685 / KC583 / Herrer 020/F12,63), this protein is 2,3-bisphosphoglycerate-dependent phosphoglycerate mutase.